Here is a 638-residue protein sequence, read N- to C-terminus: RAF proto-oncogene serine/threonine-protein kinase (638 aa).

S43 is subject to Phosphoserine. One can recognise an RBD domain in the interval 56 to 130 (STMRVYLPNK…VGAELQVDFL (75 aa)). A Phorbol-ester/DAG-type zinc finger spans residues 137–183 (THNFVRKTFLKLAFCDICQKFLLNAFRCQTCGYKFHEHCSTKVPTMC). Zn(2+)-binding residues include H138, C151, C154, C164, C167, H172, C175, and C183. Residue S257 is modified to Phosphoserine. A Phosphothreonine; by autocatalysis modification is found at T266. Residues 279-323 (LRSHSESGSPNNLSPTGWSNAKAPAPTHREKAASSTGQEKNKIRA) form a disordered region. Residues 284–297 (ESGSPNNLSPTGWS) are compositionally biased toward polar residues. Position 329 is a phosphoserine (S329). The Protein kinase domain occupies 340-600 (VMLSSRIGSG…PQILSSIELL (261 aa)). Residues 346–354 (IGSGSFGTV) and K366 contribute to the ATP site. D459 (proton acceptor) is an active-site residue. S490 is subject to Phosphoserine.

This sequence belongs to the protein kinase superfamily. TKL Ser/Thr protein kinase family. RAF subfamily. Zn(2+) serves as cofactor. Post-translationally, phosphorylation at Ser-257 inactivates kinase activity. Dephosphorylation of Ser-257 by a complex containing protein phosphatase 1 relieves inactivation, leading to stimulate RAF1 activity.

The protein resides in the cytoplasm. The protein localises to the cell membrane. It carries out the reaction L-seryl-[protein] + ATP = O-phospho-L-seryl-[protein] + ADP + H(+). The catalysed reaction is L-threonyl-[protein] + ATP = O-phospho-L-threonyl-[protein] + ADP + H(+). Functionally, serine/threonine-protein kinase that acts as a regulatory link between the membrane-associated Ras GTPases and the MAPK/ERK cascade, and this critical regulatory link functions as a switch determining cell fate decisions. RAF1 activation initiates a mitogen-activated protein kinase (MAPK) cascade that comprises a sequential phosphorylation of the dual-specific MAPK kinases (MAP2K1/MEK1 and MAP2K2/MEK2) and the extracellular signal-regulated kinases (MAPK3/ERK1 and MAPK1/ERK2). The polypeptide is RAF proto-oncogene serine/threonine-protein kinase (raf1) (Xenopus laevis (African clawed frog)).